Here is a 113-residue protein sequence, read N- to C-terminus: Colicin-E1* immunity protein (113 aa).

In terms of biological role, this protein is able to protect a cell, which harbors the plasmid pKY-1 encoding colicin E1*, against colicin E1*. The polypeptide is Colicin-E1* immunity protein (imm) (Shigella sonnei).